We begin with the raw amino-acid sequence, 241 residues long: Biosynthetic peptidoglycan transglycosylase (241 aa).

Residues 18 to 38 (GVIGIIALWMAGILIFAFLPV) form a helical membrane-spanning segment.

The protein belongs to the glycosyltransferase 51 family.

The protein localises to the cell inner membrane. The enzyme catalyses [GlcNAc-(1-&gt;4)-Mur2Ac(oyl-L-Ala-gamma-D-Glu-L-Lys-D-Ala-D-Ala)](n)-di-trans,octa-cis-undecaprenyl diphosphate + beta-D-GlcNAc-(1-&gt;4)-Mur2Ac(oyl-L-Ala-gamma-D-Glu-L-Lys-D-Ala-D-Ala)-di-trans,octa-cis-undecaprenyl diphosphate = [GlcNAc-(1-&gt;4)-Mur2Ac(oyl-L-Ala-gamma-D-Glu-L-Lys-D-Ala-D-Ala)](n+1)-di-trans,octa-cis-undecaprenyl diphosphate + di-trans,octa-cis-undecaprenyl diphosphate + H(+). It participates in cell wall biogenesis; peptidoglycan biosynthesis. In terms of biological role, peptidoglycan polymerase that catalyzes glycan chain elongation from lipid-linked precursors. The polypeptide is Biosynthetic peptidoglycan transglycosylase (Yersinia pseudotuberculosis serotype O:3 (strain YPIII)).